Consider the following 838-residue polypeptide: V-type proton ATPase 116 kDa subunit a 1 (838 aa).

The Cytoplasmic segment spans residues 1 to 388 (MGELFRSEEM…DAYGIGTYRE (388 aa)). A helical transmembrane segment spans residues 389-407 (INPAPYTIITFPFLFAVMF). At 408–409 (GD) the chain is on the vacuolar side. Residues 410-426 (FGHGILMTLIAIWMVLR) traverse the membrane as a helical segment. Residues 427–441 (ESRILSQKSDNEMFS) are Cytoplasmic-facing. The chain crosses the membrane as a helical span at residues 442–471 (TVFSGRYIILLMGLFSTYTGLIYNDCFSKS). Residues 472 to 535 (LNMFGSSWSV…ANNKLAFLNS (64 aa)) are Vacuolar-facing. Residues 536–555 (FKMKMSVILGIIHMLFGVML) traverse the membrane as a helical segment. Over 556–573 (SLLNHIYFKKPLNIYLGF) the chain is Cytoplasmic. The helical transmembrane segment at 574–594 (IPEMIFMSSLFGYLVILIFYK) threads the bilayer. Topologically, residues 595 to 639 (WTAYDAHTSKEAPSPLIHFINMFLFSYGDTSNKMLYRGQKGIQCF) are vacuolar. The chain crosses the membrane as a helical span at residues 640–659 (LVVVALLCVPWMLVAKPLVL). The Cytoplasmic segment spans residues 660–725 (RHQYLRRKHL…DTVVYQAIHT (66 aa)). The chain crosses the membrane as a helical span at residues 726 to 750 (IEYCLGCISNTASYLRLWALSLAHA). Residues 751 to 771 (QLSEVLWTMVIHTGLSVRSLA) are Vacuolar-facing. Residues 772–810 (GGFGLVFIFAAFATLTVAILLVMEGLSAFLHALRLHWIE) traverse the membrane as a helical segment. The Cytoplasmic portion of the chain corresponds to 811 to 838 (FQNKFYTGTGFKFLPFSFDPIREGKFDD).

The protein belongs to the V-ATPase 116 kDa subunit family. V-ATPase is a heteromultimeric enzyme made up of two complexes: the ATP-hydrolytic V1 complex and the proton translocation V0 complex. The V1 complex consists of three catalytic AB heterodimers that form a heterohexamer, three peripheral stalks each consisting of EG heterodimers, one central rotor including subunits D and F, and the regulatory subunits C and H. The proton translocation complex V0 consists of the proton transport subunit a, a ring of proteolipid subunits c9c'', rotary subunit d, subunits e and f, and two accessory subunits. Detected in brain (at protein level). Highest expression in brain, intermediate levels in kidney, and relatively low levels in bone and liver.

It is found in the cytoplasmic vesicle. It localises to the clathrin-coated vesicle membrane. Its subcellular location is the secretory vesicle. The protein localises to the synaptic vesicle membrane. The protein resides in the melanosome. Its function is as follows. Subunit of the V0 complex of vacuolar(H+)-ATPase (V-ATPase), a multisubunit enzyme composed of a peripheral complex (V1) that hydrolyzes ATP and a membrane integral complex (V0) that translocates protons. V-ATPase is responsible for acidifying and maintaining the pH of intracellular compartments and in some cell types, is targeted to the plasma membrane, where it is responsible for acidifying the extracellular environment. Required for assembly and activity of the vacuolar ATPase. The polypeptide is V-type proton ATPase 116 kDa subunit a 1 (ATP6V0A1) (Gallus gallus (Chicken)).